Consider the following 63-residue polypeptide: uncharacterized protein (63 aa).

This is an uncharacterized protein from Dictyostelium discoideum (Social amoeba).